The sequence spans 122 residues: Ribonuclease P protein component (122 aa).

The protein belongs to the RnpA family. Consists of a catalytic RNA component (M1 or rnpB) and a protein subunit.

It catalyses the reaction Endonucleolytic cleavage of RNA, removing 5'-extranucleotides from tRNA precursor.. Its function is as follows. RNaseP catalyzes the removal of the 5'-leader sequence from pre-tRNA to produce the mature 5'-terminus. It can also cleave other RNA substrates such as 4.5S RNA. The protein component plays an auxiliary but essential role in vivo by binding to the 5'-leader sequence and broadening the substrate specificity of the ribozyme. This Synechococcus elongatus (strain ATCC 33912 / PCC 7942 / FACHB-805) (Anacystis nidulans R2) protein is Ribonuclease P protein component.